The sequence spans 203 residues: Glycerol-3-phosphate acyltransferase (203 aa).

5 helical membrane-spanning segments follow: residues 4–24 (IAYLLILGAYLLGSISSAVIF), 56–76 (LGVLMADILKGMLPVSLGFYL), 80–100 (ISVIGFIALAACLGHIFPVFF), 115–135 (IIPMGYSVAGLAVGTWLFVFL), and 149–169 (LIVPLYIWWFSSELTFPVALV).

Belongs to the PlsY family. As to quaternary structure, probably interacts with PlsX.

It localises to the cell inner membrane. The enzyme catalyses an acyl phosphate + sn-glycerol 3-phosphate = a 1-acyl-sn-glycero-3-phosphate + phosphate. Its pathway is lipid metabolism; phospholipid metabolism. In terms of biological role, catalyzes the transfer of an acyl group from acyl-phosphate (acyl-PO(4)) to glycerol-3-phosphate (G3P) to form lysophosphatidic acid (LPA). This enzyme utilizes acyl-phosphate as fatty acyl donor, but not acyl-CoA or acyl-ACP. This chain is Glycerol-3-phosphate acyltransferase, found in Glaesserella parasuis serovar 5 (strain SH0165) (Haemophilus parasuis).